Reading from the N-terminus, the 718-residue chain is Methionine--tRNA ligase (718 aa).

A 'HIGH' region motif is present at residues P12–H22. Zn(2+)-binding residues include C143, C146, C156, and C159. A 'KMSKS' region motif is present at residues K349–S353. K352 provides a ligand contact to ATP. Positions A573–T599 are disordered. The tRNA-binding domain maps to D608–K718.

This sequence belongs to the class-I aminoacyl-tRNA synthetase family. MetG type 1 subfamily. Homodimer. It depends on Zn(2+) as a cofactor.

It localises to the cytoplasm. The enzyme catalyses tRNA(Met) + L-methionine + ATP = L-methionyl-tRNA(Met) + AMP + diphosphate. In terms of biological role, is required not only for elongation of protein synthesis but also for the initiation of all mRNA translation through initiator tRNA(fMet) aminoacylation. This Aromatoleum aromaticum (strain DSM 19018 / LMG 30748 / EbN1) (Azoarcus sp. (strain EbN1)) protein is Methionine--tRNA ligase.